Consider the following 382-residue polypeptide: ATP phosphoribosyltransferase regulatory subunit (382 aa).

The protein belongs to the class-II aminoacyl-tRNA synthetase family. HisZ subfamily. As to quaternary structure, heteromultimer composed of HisG and HisZ subunits.

The protein resides in the cytoplasm. It participates in amino-acid biosynthesis; L-histidine biosynthesis; L-histidine from 5-phospho-alpha-D-ribose 1-diphosphate: step 1/9. Functionally, required for the first step of histidine biosynthesis. May allow the feedback regulation of ATP phosphoribosyltransferase activity by histidine. The chain is ATP phosphoribosyltransferase regulatory subunit from Burkholderia cenocepacia (strain ATCC BAA-245 / DSM 16553 / LMG 16656 / NCTC 13227 / J2315 / CF5610) (Burkholderia cepacia (strain J2315)).